Reading from the N-terminus, the 250-residue chain is 2,3-bisphosphoglycerate-dependent phosphoglycerate mutase (250 aa).

Residues Arg10–Asn17, Thr23–Gly24, Arg62, Glu89–Tyr92, Lys100, Arg116–Arg117, and Gly185–Asn186 each bind substrate. The Tele-phosphohistidine intermediate role is filled by His11. Glu89 (proton donor/acceptor) is an active-site residue.

The protein belongs to the phosphoglycerate mutase family. BPG-dependent PGAM subfamily. In terms of assembly, homodimer.

The catalysed reaction is (2R)-2-phosphoglycerate = (2R)-3-phosphoglycerate. Its pathway is carbohydrate degradation; glycolysis; pyruvate from D-glyceraldehyde 3-phosphate: step 3/5. Catalyzes the interconversion of 2-phosphoglycerate and 3-phosphoglycerate. The polypeptide is 2,3-bisphosphoglycerate-dependent phosphoglycerate mutase (Cronobacter sakazakii (strain ATCC BAA-894) (Enterobacter sakazakii)).